The primary structure comprises 216 residues: Probable transaldolase (216 aa).

Catalysis depends on Lys83, which acts as the Schiff-base intermediate with substrate.

The protein belongs to the transaldolase family. Type 3B subfamily.

It is found in the cytoplasm. It catalyses the reaction D-sedoheptulose 7-phosphate + D-glyceraldehyde 3-phosphate = D-erythrose 4-phosphate + beta-D-fructose 6-phosphate. Its pathway is carbohydrate degradation; pentose phosphate pathway; D-glyceraldehyde 3-phosphate and beta-D-fructose 6-phosphate from D-ribose 5-phosphate and D-xylulose 5-phosphate (non-oxidative stage): step 2/3. Functionally, transaldolase is important for the balance of metabolites in the pentose-phosphate pathway. The polypeptide is Probable transaldolase (Desulforamulus reducens (strain ATCC BAA-1160 / DSM 100696 / MI-1) (Desulfotomaculum reducens)).